The chain runs to 192 residues: MKTDEVLGIFREAGAVLEGHFILTSGLRSPVFLQKARVFMHADKTERLCRALAEKIRAAVPGKIDYVVGPAIGGLIPAYETSRHLGVPAIWVEREGGEFRLRRFEIARGARVVIVEDIVTTGLSIRETIECLRELGAEVVAAACIIDRSAGKTHVGVPLIALAEYEVPAYPPDRLPPELAAIPAVKPGSRNI.

Position 116–124 (glutamate 116–serine 124) interacts with 5-phospho-alpha-D-ribose 1-diphosphate. Threonine 120 and arginine 148 together coordinate orotate.

Belongs to the purine/pyrimidine phosphoribosyltransferase family. PyrE subfamily. In terms of assembly, homodimer. It depends on Mg(2+) as a cofactor.

It carries out the reaction orotidine 5'-phosphate + diphosphate = orotate + 5-phospho-alpha-D-ribose 1-diphosphate. It participates in pyrimidine metabolism; UMP biosynthesis via de novo pathway; UMP from orotate: step 1/2. Functionally, catalyzes the transfer of a ribosyl phosphate group from 5-phosphoribose 1-diphosphate to orotate, leading to the formation of orotidine monophosphate (OMP). The chain is Orotate phosphoribosyltransferase 2 from Mesorhizobium japonicum (strain LMG 29417 / CECT 9101 / MAFF 303099) (Mesorhizobium loti (strain MAFF 303099)).